Here is a 764-residue protein sequence, read N- to C-terminus: 5-methyltetrahydropteroyltriglutamate--homocysteine methyltransferase (764 aa).

5-methyltetrahydropteroyltri-L-glutamate is bound by residues 17-20 and lysine 117; that span reads RELK. L-homocysteine-binding positions include 436 to 438 and glutamate 489; that span reads IGS. L-methionine contacts are provided by residues 436-438 and glutamate 489; that span reads IGS. Residues 520-521 and tryptophan 566 each bind 5-methyltetrahydropteroyltri-L-glutamate; that span reads RC. L-homocysteine is bound at residue aspartate 604. Aspartate 604 lines the L-methionine pocket. Glutamate 610 lines the 5-methyltetrahydropteroyltri-L-glutamate pocket. Zn(2+)-binding residues include histidine 646, cysteine 648, and glutamate 670. Histidine 699 acts as the Proton donor in catalysis. Cysteine 731 contacts Zn(2+).

Belongs to the vitamin-B12 independent methionine synthase family. Requires Zn(2+) as cofactor.

The catalysed reaction is 5-methyltetrahydropteroyltri-L-glutamate + L-homocysteine = tetrahydropteroyltri-L-glutamate + L-methionine. It functions in the pathway amino-acid biosynthesis; L-methionine biosynthesis via de novo pathway; L-methionine from L-homocysteine (MetE route): step 1/1. Functionally, catalyzes the transfer of a methyl group from 5-methyltetrahydrofolate to homocysteine resulting in methionine formation. The polypeptide is 5-methyltetrahydropteroyltriglutamate--homocysteine methyltransferase (Baumannia cicadellinicola subsp. Homalodisca coagulata).